A 157-amino-acid polypeptide reads, in one-letter code: uncharacterized protein (157 aa).

The signal sequence occupies residues 1–30 (MLPEQGPQPSTMPLWCLLAACTSLPRQAAT).

It localises to the secreted. This is an uncharacterized protein from Homo sapiens (Human).